The sequence spans 151 residues: Large ribosomal subunit protein bL9 (151 aa).

The protein belongs to the bacterial ribosomal protein bL9 family.

Functionally, binds to the 23S rRNA. The polypeptide is Large ribosomal subunit protein bL9 (Mycolicibacterium smegmatis (strain ATCC 700084 / mc(2)155) (Mycobacterium smegmatis)).